The primary structure comprises 298 residues: Mitochondrial dicarboxylate/tricarboxylate transporter DTC (298 aa).

3 Solcar repeats span residues 12-93, 103-194, and 202-292; these read WTTV…LTAK, LPLY…SAEY, and GEMS…ITKF. Transmembrane regions (helical) follow at residues 18–38, 68–88, 109–129, 169–189, 208–228, and 268–288; these read FVNGGASGMLATCVIQPIDMI, GLSAGLLRQATYTTARLGSFK, ALCGLTAGAIGACVGSPADLA, GCGPTVVRAMALNMGMLASYD, VGASAVSGFCAAACSLPFDFV, and FPVYCVRIAPHVMMTWIFLNQ.

This sequence belongs to the mitochondrial carrier (TC 2.A.29) family. In terms of tissue distribution, highly expressed in flower buds and at lower levels in roots, leaves and stems.

It is found in the mitochondrion inner membrane. Its function is as follows. Catalyzes the transport of dicarboxylates, such as oxoglutarate, oxaloacetate, malate, and succinate, and of tricarboxylates, such as citrate, isocitrate, cis-aconitate, and trans-aconitate by a counter-exchange mechanism across the inner mitochondrial membrane. Substrate preference in reconstituted proteoliposomes is oxaloacetate &gt; malonate &gt; malate &gt; maleate &gt; succinate &gt; oxoglutarate &gt; citrate &gt; trans-aconitate &gt; cis-aconitate &gt; sulfate &gt; isocitrate. May be important for plant metabolic functions requiring organic acid flux to or from the mitochondria, such as nitrogen assimilation, export of reducing equivalents from the mitochondria, and fatty acid elongation. The polypeptide is Mitochondrial dicarboxylate/tricarboxylate transporter DTC (DTC) (Arabidopsis thaliana (Mouse-ear cress)).